Here is a 425-residue protein sequence, read N- to C-terminus: Serine--tRNA ligase (425 aa).

231–233 serves as a coordination point for L-serine; sequence TAE. Residues 262–264 and V278 contribute to the ATP site; that span reads RTE. E285 is an L-serine binding site. 349–352 lines the ATP pocket; the sequence is EVTS. Residue T384 participates in L-serine binding.

Belongs to the class-II aminoacyl-tRNA synthetase family. Type-1 seryl-tRNA synthetase subfamily. Homodimer. The tRNA molecule binds across the dimer.

It is found in the cytoplasm. It carries out the reaction tRNA(Ser) + L-serine + ATP = L-seryl-tRNA(Ser) + AMP + diphosphate + H(+). The catalysed reaction is tRNA(Sec) + L-serine + ATP = L-seryl-tRNA(Sec) + AMP + diphosphate + H(+). It participates in aminoacyl-tRNA biosynthesis; selenocysteinyl-tRNA(Sec) biosynthesis; L-seryl-tRNA(Sec) from L-serine and tRNA(Sec): step 1/1. In terms of biological role, catalyzes the attachment of serine to tRNA(Ser). Is also able to aminoacylate tRNA(Sec) with serine, to form the misacylated tRNA L-seryl-tRNA(Sec), which will be further converted into selenocysteinyl-tRNA(Sec). The protein is Serine--tRNA ligase of Dictyoglomus turgidum (strain DSM 6724 / Z-1310).